The primary structure comprises 197 residues: Putative peptidyl-prolyl cis-trans isomerase (197 aa).

The region spanning 14–195 (NEIKLIMHTN…HDITIDSIEI (182 aa)) is the PPIase cyclophilin-type domain.

This sequence belongs to the cyclophilin-type PPIase family.

The enzyme catalyses [protein]-peptidylproline (omega=180) = [protein]-peptidylproline (omega=0). In terms of biological role, PPIases accelerate the folding of proteins. It catalyzes the cis-trans isomerization of proline imidic peptide bonds in oligopeptides. This is Putative peptidyl-prolyl cis-trans isomerase from Staphylococcus saprophyticus subsp. saprophyticus (strain ATCC 15305 / DSM 20229 / NCIMB 8711 / NCTC 7292 / S-41).